The sequence spans 657 residues: tRNA 5-methylaminomethyl-2-thiouridine biosynthesis bifunctional protein MnmC (657 aa).

The segment at 1–239 (MTDRIVPATL…KRAMLVGEFA (239 aa)) is tRNA (mnm(5)s(2)U34)-methyltransferase. Residues 263–657 (IGAGLAGCAV…VRALRHGRVA (395 aa)) are FAD-dependent cmnm(5)s(2)U34 oxidoreductase.

In the N-terminal section; belongs to the methyltransferase superfamily. tRNA (mnm(5)s(2)U34)-methyltransferase family. This sequence in the C-terminal section; belongs to the DAO family. Requires FAD as cofactor.

It localises to the cytoplasm. It carries out the reaction 5-aminomethyl-2-thiouridine(34) in tRNA + S-adenosyl-L-methionine = 5-methylaminomethyl-2-thiouridine(34) in tRNA + S-adenosyl-L-homocysteine + H(+). In terms of biological role, catalyzes the last two steps in the biosynthesis of 5-methylaminomethyl-2-thiouridine (mnm(5)s(2)U) at the wobble position (U34) in tRNA. Catalyzes the FAD-dependent demodification of cmnm(5)s(2)U34 to nm(5)s(2)U34, followed by the transfer of a methyl group from S-adenosyl-L-methionine to nm(5)s(2)U34, to form mnm(5)s(2)U34. This Burkholderia pseudomallei (strain 668) protein is tRNA 5-methylaminomethyl-2-thiouridine biosynthesis bifunctional protein MnmC.